A 336-amino-acid chain; its full sequence is Glucokinase (336 aa).

12–17 is an ATP binding site; it reads ADIGGT.

The protein belongs to the bacterial glucokinase family.

It is found in the cytoplasm. The catalysed reaction is D-glucose + ATP = D-glucose 6-phosphate + ADP + H(+). This Helicobacter pylori (strain J99 / ATCC 700824) (Campylobacter pylori J99) protein is Glucokinase.